A 219-amino-acid chain; its full sequence is Aspartic protease inhibitor 10 (219 aa).

Positions 1–23 are cleaved as a signal peptide; it reads MMKCLFLLCLCLVPIVVFSSTFT. A propeptide spanning residues 24–32 is cleaved from the precursor; the sequence is SQNLIDLPS. The Vacuolar targeting signal motif lies at 26–31; sequence NLIDLP. Asparagine 51 is a glycosylation site (N-linked (GlcNAc...) asparagine). Cystine bridges form between cysteine 80-cysteine 125 and cysteine 173-cysteine 184.

This sequence belongs to the protease inhibitor I3 (leguminous Kunitz-type inhibitor) family. In terms of tissue distribution, in tubers and green buds of untreated plants. After abscisic acid treatment or mechanical wounding is mostly accumulated in leaves, to a lesser extent in stems, but not in roots.

In terms of biological role, inhibitor of cathepsin D (aspartic protease) and trypsin (serine protease). Protects the plant by inhibiting proteases of invading organisms. This chain is Aspartic protease inhibitor 10 (CDI), found in Solanum tuberosum (Potato).